Reading from the N-terminus, the 253-residue chain is MSLLSVMPATTAQQSRAEQVAHHFHWPLVAVEALCPTPLLLWVGPTGLALKSADGKHQHPITAQLQGGSIGLAGPDSWVRGQPLARAVGIKGQHTPTVVDATAGLGGDGWLMARMGCSMHWAERVPLMGLLLQEGLEQAHQDAQRAEVARRVTLHQADAIQLLQNMQEPPQVVYLDPMFPHEGKGSLPRKAMVQLRQLAGEDQDLPQLFELAMATAEQRVVLKRPLKAPLLTRAKPNFQLKGRSTRFDVYATG.

S-adenosyl-L-methionine contacts are provided by residues 123–124 (ER) and Asp-176.

Belongs to the methyltransferase superfamily. RsmJ family.

It is found in the cytoplasm. The catalysed reaction is guanosine(1516) in 16S rRNA + S-adenosyl-L-methionine = N(2)-methylguanosine(1516) in 16S rRNA + S-adenosyl-L-homocysteine + H(+). In terms of biological role, specifically methylates the guanosine in position 1516 of 16S rRNA. The protein is Ribosomal RNA small subunit methyltransferase J of Magnetococcus marinus (strain ATCC BAA-1437 / JCM 17883 / MC-1).